Reading from the N-terminus, the 299-residue chain is Nucleoporin POM34 (299 aa).

A disordered region spans residues 1 to 39; the sequence is MKIQAGQLGLDDNDVPGPLPDTDSKPSSQSQNDTPMFKL. The segment covering 25 to 34 has biased composition (polar residues); sequence KPSSQSQNDT. Transmembrane regions (helical) follow at residues 64 to 84 and 133 to 153; these read IMTNVIAFAFWNLLVKFIKFF and LFHLLISLNILFSLWKLLSTV. A Phosphoserine modification is found at S270. Phosphothreonine is present on T273. 2 positions are modified to phosphoserine: S292 and S294.

As to quaternary structure, component of the nuclear pore complex (NPC). NPC constitutes the exclusive means of nucleocytoplasmic transport. NPCs allow the passive diffusion of ions and small molecules and the active, nuclear transport receptor-mediated bidirectional transport of macromolecules such as proteins, RNAs, ribonucleoparticles (RNPs), and ribosomal subunits across the nuclear envelope. Due to its 8-fold rotational symmetry, all subunits are present with 8 copies or multiples thereof.

The protein localises to the nucleus. It is found in the nuclear pore complex. Its subcellular location is the nucleus membrane. Its function is as follows. Functions as a component of the nuclear pore complex (NPC). NPC components, collectively referred to as nucleoporins (NUPs), can play the role of both NPC structural components and of docking or interaction partners for transiently associated nuclear transport factors. The polypeptide is Nucleoporin POM34 (POM34) (Saccharomyces cerevisiae (strain ATCC 204508 / S288c) (Baker's yeast)).